Reading from the N-terminus, the 399-residue chain is S-adenosylmethionine synthase (399 aa).

His15 provides a ligand contact to ATP. A Mg(2+)-binding site is contributed by Asp17. K(+) is bound at residue Glu43. 2 residues coordinate L-methionine: Glu56 and Gln99. Residues 99–109 (QSPDIARGVNR) are flexible loop. ATP-binding positions include 166–168 (DAK), 232–233 (RF), Asp241, 247–248 (RK), Ala264, and Lys268. L-methionine is bound at residue Asp241. Lys272 lines the L-methionine pocket.

This sequence belongs to the AdoMet synthase family. In terms of assembly, homotetramer; dimer of dimers. It depends on Mg(2+) as a cofactor. K(+) is required as a cofactor.

It localises to the cytoplasm. The enzyme catalyses L-methionine + ATP + H2O = S-adenosyl-L-methionine + phosphate + diphosphate. It participates in amino-acid biosynthesis; S-adenosyl-L-methionine biosynthesis; S-adenosyl-L-methionine from L-methionine: step 1/1. In terms of biological role, catalyzes the formation of S-adenosylmethionine (AdoMet) from methionine and ATP. The overall synthetic reaction is composed of two sequential steps, AdoMet formation and the subsequent tripolyphosphate hydrolysis which occurs prior to release of AdoMet from the enzyme. The chain is S-adenosylmethionine synthase from Nitrosospira multiformis (strain ATCC 25196 / NCIMB 11849 / C 71).